The chain runs to 126 residues: Small ribosomal subunit protein bS6 (126 aa).

This sequence belongs to the bacterial ribosomal protein bS6 family.

Binds together with bS18 to 16S ribosomal RNA. The polypeptide is Small ribosomal subunit protein bS6 (Actinobacillus succinogenes (strain ATCC 55618 / DSM 22257 / CCUG 43843 / 130Z)).